Here is a 540-residue protein sequence, read N- to C-terminus: Gamma-cadinene synthase (540 aa).

5 residues coordinate Mg(2+): D292, D296, D436, S440, and E444. The DDXXD motif signature appears at 292 to 296 (DDTYD).

Belongs to the terpene synthase family. Mg(2+) serves as cofactor. The cofactor is Mn(2+).

It carries out the reaction (2E,6E)-farnesyl diphosphate = (+)-gamma-cadinene + diphosphate. Its pathway is secondary metabolite biosynthesis; terpenoid biosynthesis. Its function is as follows. Sesquiterpene synthase that catalyzes the cyclization of trans,trans-farnesyl diphosphate (FPP) to gamma cadinene. The polypeptide is Gamma-cadinene synthase (CDS) (Ocimum basilicum (Sweet basil)).